Here is a 650-residue protein sequence, read N- to C-terminus: Primary amine oxidase 1 (650 aa).

The N-terminal stretch at 1–19 is a signal peptide; sequence MNTSILAILFLIQCVFTLG. Residues asparagine 2, asparagine 34, asparagine 62, and asparagine 149 are each glycosylated (N-linked (GlcNAc...) asparagine). Cysteine 155 and cysteine 176 form a disulfide bridge. Residue asparagine 235 is glycosylated (N-linked (GlcNAc...) asparagine). 308–319 lines the substrate pocket; it reads FMDIGEFGFGRS. Aspartate 310 acts as the Proton acceptor in catalysis. Cysteine 329 and cysteine 355 form a disulfide bridge. 395–400 provides a ligand contact to substrate; sequence LGNYDY. Tyrosine 398 serves as the catalytic Schiff-base intermediate with substrate; via topaquinone. Tyrosine 398 carries the 2',4',5'-topaquinone modification. Residues histidine 453 and histidine 455 each coordinate Cu cation. 2 residues coordinate Mn(2+): aspartate 462 and aspartate 464. The N-linked (GlcNAc...) asparagine glycan is linked to asparagine 486. The Mn(2+) site is built by aspartate 607 and isoleucine 608. Histidine 618 is a Cu cation binding site.

This sequence belongs to the copper/topaquinone oxidase family. As to quaternary structure, homodimer. It depends on L-topaquinone as a cofactor. The cofactor is Cu cation. Zn(2+) serves as cofactor. Mn(2+) is required as a cofactor. Post-translationally, topaquinone (TPQ) is generated by copper-dependent autoxidation of a specific tyrosyl residue. Expressed in the vascular tissues at the division/differentiation transition zone.

It localises to the secreted. The catalysed reaction is a primary methyl amine + O2 + H2O = an aldehyde + H2O2 + NH4(+). With respect to regulation, repressed by semi-carbazide, a specific and irreversible inhibitor of copper amine oxidases. In terms of biological role, oxidizes preferentially the aliphatic diamine putrescine with production of the corresponding aldehyde, ammonia and hydrogen peroxide. May be involved in the regulation of developmental programmed cell death (PCD) in both vascular tissue and the root cap. Required for jasmonic acid-(MeJA) mediated early protoxylem differentiation associated with putrescine levels reduction and H(2)O(2) accumulation in roots. This Arabidopsis thaliana (Mouse-ear cress) protein is Primary amine oxidase 1.